A 187-amino-acid chain; its full sequence is MAADISQWAGPLSLQEVDEPPQHALRVDYGGVTVDELGKVLTPTQVMNRPSSISWDGLDPGKLYTLVLTDPDAPSRKDPKFREWHHFLVVNMKGNDISSGTVLSEYVGSGPPKDTGLHRYVWLVYEQEQPLNCDEPILSNKSGDNRGKFKVESFRKKYHLGAPVAGTCFQAEWDDSVPKLHDQLAGK.

N-acetylalanine; in peptide hippocampal cholinergic neurostimulating is present on alanine 2. Phosphoserine occurs at positions 6 and 13. At threonine 42 the chain carries Phosphothreonine. A phosphoserine mark is found at serine 52, serine 54, serine 98, and serine 153. Residues lysine 93 to aspartate 134 form an interaction with RAF1 region.

This sequence belongs to the phosphatidylethanolamine-binding protein family. In terms of assembly, has a tendency to form dimers by disulfide cross-linking. Interacts with RAF1 and this interaction is enhanced if RAF1 is phosphorylated on residues 'Ser-338', 'Ser-339', 'Tyr-340' and 'Tyr-341'. Interacts with ALOX15; in response to IL13/interleukin-13, prevents the interaction of PEBP1 with RAF1 to activate the ERK signaling cascade. As to expression, major component of epididymal secretions and sperm plasma membranes. It is present in cytosols from a variety of other tissues. Highly expressed in brain.

The protein localises to the cytoplasm. The protein resides in the membrane. Its function is as follows. Binds ATP, opioids and phosphatidylethanolamine. Has lower affinity for phosphatidylinositol and phosphatidylcholine. Serine protease inhibitor which inhibits thrombin, neuropsin and chymotrypsin but not trypsin, tissue type plasminogen activator and elastase. Inhibits the kinase activity of RAF1 by inhibiting its activation and by dissociating the RAF1/MEK complex and acting as a competitive inhibitor of MEK phosphorylation. Functionally, HCNP may be involved in the function of the presynaptic cholinergic neurons of the central nervous system. HCNP increases the production of choline acetyltransferase but not acetylcholinesterase. Seems to be mediated by a specific receptor. The chain is Phosphatidylethanolamine-binding protein 1 (Pebp1) from Rattus norvegicus (Rat).